Here is a 505-residue protein sequence, read N- to C-terminus: MMQMMEFSFSSPAFFLLLPFLFLLIKPLISRKRGPKLPPGPKKLPIVGNLFHMEGALPHLALKKMTDKYGPICHLKLGELEAVVVSSAELAKEVLNTHAVTFADRPETNVSKIVMYNNSGMTFARYGDYFKLLRQIYASELLSPRCVRSSTNHMEDELSKFVVKIQAEAGKPIFLLERVKSYLFAVLFDSMIGGACKCPERYIEAAKELSANSAAMRLEDFFPSVTLLPKLSGFNTVLAKLKKKIDDLLDDLISEREKIQANATGPMEEHMLDVLLKLRNGSGSETKVPITNEDVKAVVFELMLSNLSTAATEEWAMSEMMRSPKVFKKAQDEVRRVFKGKNRICASELHNLEYLKLVIKEALRMHPPAPLLFPRKAREDCEIGGYTIPVGTMVWVNYWAVGRDPQLWHDADKFEPERFSNVPMDFNGSHSELIPFGAGRRICPGIAYGVTNLELLLSALLYHFDWELPNGKQPEEIDMDEFYGSGCIRKNPLALIPKVVIPCQA.

The chain crosses the membrane as a helical span at residues Phe9–Ile29. Residue Cys443 coordinates heme.

This sequence belongs to the cytochrome P450 family. It depends on heme as a cofactor. Mainly expressed in roots.

It is found in the membrane. It carries out the reaction (19E)-geissoschizine + reduced [NADPH--hemoprotein reductase] + O2 = akuammicine + formate + oxidized [NADPH--hemoprotein reductase] + H2O + H(+). The catalysed reaction is (19E)-geissoschizine + reduced [NADPH--hemoprotein reductase] + O2 = 3,17-didehydrostemmadenine + oxidized [NADPH--hemoprotein reductase] + 2 H2O. It catalyses the reaction 3,17-didehydrostemmadenine = 17-dehydropreakuammicine. It functions in the pathway alkaloid biosynthesis. Monooxygenase involved in the biosynthesis of curare monoterpene indole alkaloids (MIAs), natural products such as strychnine, a neurotoxic compound used as a pesticide to control rodents, and its pharmacologically active derivatives, including brucine, used to regulate blood pressure. Curare alkaloids act as animal glycine receptor antagonists. Catalyzes the conversion of geissoschizine to dehydropreakuammicine by cyclization, which is spontaneously converted into akuammicine by aromatization. This Strychnos nux-vomica (Poison nut) protein is Geissoschizine oxidase.